The primary structure comprises 651 residues: PTS system N-acetylglucosamine-specific EIICBA component (651 aa).

Residues 1–371 (MNILGFFQRL…FNLKTPGRED (371 aa)) enclose the PTS EIIC type-1 domain. Helical transmembrane passes span 16-36 (LPIAVLPVAALLLRFGQPDLL), 40-60 (FIAQAGGAIFDNLALIFAIGV), 70-90 (GSAALAGAVGYFVMTKAMVTI), 92-112 (PEINMGVLAGIITGLVAGAVY), 132-152 (FVPIATGFFCLILAAIFGYVW), 165-185 (WIVSAGALGSGIFGFINRLLI), 192-212 (VLNTIAWFQIGEFTNAAGTVF), 232-252 (GFFPIMMFGLPGAALAMYLAA), 264-284 (LLSVAITAFLTGVTEPLEFLF), 285-305 (LFLAPLLYLLHAVLTGISLFI), 308-328 (ALGIHAGFSFSAGAIDYVLMY), and 339-359 (MLLVMGVVFFFVYFLLFSAVI). The PTS EIIB type-1 domain maps to 390-472 (TQLATSYIAA…KKVVTRGPVA (83 aa)). Cysteine 412 functions as the Phosphocysteine intermediate; for EIIB activity in the catalytic mechanism. Position 412 is a phosphocysteine; by EIIA (cysteine 412). Residues 519–623 (DEAFASKAVG…SMISPVVCSN (105 aa)) enclose the PTS EIIA type-1 domain. Zn(2+) contacts are provided by histidine 556 and histidine 571. The active-site Tele-phosphohistidine intermediate; for EIIA activity is histidine 571. Residue histidine 571 is modified to Phosphohistidine; by HPr.

Zn(2+) serves as cofactor.

The protein resides in the cell inner membrane. It carries out the reaction N(pros)-phospho-L-histidyl-[protein] + N-acetyl-D-glucosamine(out) = N-acetyl-D-glucosamine 6-phosphate(in) + L-histidyl-[protein]. Functionally, the phosphoenolpyruvate-dependent sugar phosphotransferase system (sugar PTS), a major carbohydrate active transport system, catalyzes the phosphorylation of incoming sugar substrates concomitantly with their translocation across the cell membrane. This system is involved in N-acetylglucosamine transport. This chain is PTS system N-acetylglucosamine-specific EIICBA component (nagE), found in Klebsiella pneumoniae.